A 1065-amino-acid polypeptide reads, in one-letter code: Valine--tRNA ligase, mitochondrial (1065 aa).

Residues methionine 1–glycine 15 constitute a mitochondrion transit peptide. The disordered stretch occupies residues alanine 27–arginine 52. Basic and acidic residues predominate over residues arginine 42 to arginine 52. A 'HIGH' region motif is present at residues proline 146 to histidine 156. Residues lysine 659–serine 663 carry the 'KMSKS' region motif. Position 662 (lysine 662) interacts with ATP.

The protein belongs to the class-I aminoacyl-tRNA synthetase family.

The protein resides in the mitochondrion. It catalyses the reaction tRNA(Val) + L-valine + ATP = L-valyl-tRNA(Val) + AMP + diphosphate. Its function is as follows. Catalyzes the attachment of valine to tRNA(Val) in a two-step reaction: valine is first activated by ATP to form Val-AMP and then transferred to the acceptor end of tRNA(Val). The protein is Valine--tRNA ligase, mitochondrial (Vars2) of Rattus norvegicus (Rat).